The sequence spans 338 residues: UDP-3-O-acylglucosamine N-acyltransferase (338 aa).

His-239 serves as the catalytic Proton acceptor.

Belongs to the transferase hexapeptide repeat family. LpxD subfamily. In terms of assembly, homotrimer.

It carries out the reaction a UDP-3-O-[(3R)-3-hydroxyacyl]-alpha-D-glucosamine + a (3R)-hydroxyacyl-[ACP] = a UDP-2-N,3-O-bis[(3R)-3-hydroxyacyl]-alpha-D-glucosamine + holo-[ACP] + H(+). Its pathway is bacterial outer membrane biogenesis; LPS lipid A biosynthesis. Catalyzes the N-acylation of UDP-3-O-acylglucosamine using 3-hydroxyacyl-ACP as the acyl donor. Is involved in the biosynthesis of lipid A, a phosphorylated glycolipid that anchors the lipopolysaccharide to the outer membrane of the cell. The protein is UDP-3-O-acylglucosamine N-acyltransferase of Xylella fastidiosa (strain M12).